The following is a 654-amino-acid chain: Bifunctional 3'-phosphoadenosine 5'-phosphosulfate synthase pps-1 (654 aa).

A disordered region spans residues 1–26; that stretch reads MLTPRDENNEGDAMPMLKKPRYSSLS. The adenylyl-sulfate kinase stretch occupies residues 1–231; sequence MLTPRDENNE…VLDHLESKGL (231 aa). Residue 66-71 coordinates ATP; sequence GAGKTT. Adenosine 5'-phosphosulfate-binding positions include 93 to 96, Phe105, 110 to 113, 136 to 137, Lys175, and 190 to 191; these read DNIR, RQEN, IS, and GF. Residues Cys218, 449–452, 550–554, and Ala592 each bind ATP; these read QLRN and GRDPA. The segment at 242–653 is sulfate adenylyltransferase; that stretch reads VRELFVSDDL…AGYYKSLQNS (412 aa).

This sequence in the N-terminal section; belongs to the APS kinase family. The protein in the C-terminal section; belongs to the sulfate adenylyltransferase family.

Its subcellular location is the nucleus. It carries out the reaction sulfate + ATP + H(+) = adenosine 5'-phosphosulfate + diphosphate. The enzyme catalyses adenosine 5'-phosphosulfate + ATP = 3'-phosphoadenylyl sulfate + ADP + H(+). It functions in the pathway sulfur metabolism; sulfate assimilation. Functionally, bifunctional enzyme with both ATP sulfurylase and APS kinase activity, which mediates two steps in the sulfate activation pathway. The first step is the transfer of a sulfate group to ATP to yield adenosine 5'-phosphosulfate (APS), and the second step is the transfer of a phosphate group from ATP to APS yielding 3'-phosphoadenylylsulfate (PAPS: activated sulfate donor used by sulfotransferase). Required for normal growth and development. Involved in several aspects of both embryonic and postembryonic development, including molting, changes in cell shape, and patterning of epithelial and muscle cells. The chain is Bifunctional 3'-phosphoadenosine 5'-phosphosulfate synthase pps-1 from Caenorhabditis elegans.